The following is a 251-amino-acid chain: Hydroxyacylglutathione hydrolase (251 aa).

Zn(2+) is bound by residues His-53, His-55, Asp-57, His-58, His-110, Asp-127, and His-165.

Belongs to the metallo-beta-lactamase superfamily. Glyoxalase II family. As to quaternary structure, monomer. The cofactor is Zn(2+).

The catalysed reaction is an S-(2-hydroxyacyl)glutathione + H2O = a 2-hydroxy carboxylate + glutathione + H(+). Its pathway is secondary metabolite metabolism; methylglyoxal degradation; (R)-lactate from methylglyoxal: step 2/2. Thiolesterase that catalyzes the hydrolysis of S-D-lactoyl-glutathione to form glutathione and D-lactic acid. The polypeptide is Hydroxyacylglutathione hydrolase (Pectobacterium carotovorum subsp. carotovorum (strain PC1)).